The chain runs to 206 residues: Large ribosomal subunit protein uL3 (206 aa).

It belongs to the universal ribosomal protein uL3 family. Part of the 50S ribosomal subunit. Forms a cluster with proteins L14 and L19.

Functionally, one of the primary rRNA binding proteins, it binds directly near the 3'-end of the 23S rRNA, where it nucleates assembly of the 50S subunit. The protein is Large ribosomal subunit protein uL3 of Cytophaga hutchinsonii (strain ATCC 33406 / DSM 1761 / CIP 103989 / NBRC 15051 / NCIMB 9469 / D465).